A 277-amino-acid chain; its full sequence is Probable CCR4-associated factor 1 homolog 10 (277 aa).

Residues Asp-40, Glu-42, Asp-166, and Asp-235 each contribute to the a divalent metal cation site.

The protein belongs to the CAF1 family. Component of the CCR4-NOT complex, at least composed of CRR4 and CAF1 proteins. A divalent metal cation is required as a cofactor.

The protein localises to the nucleus. It localises to the cytoplasm. It carries out the reaction Exonucleolytic cleavage of poly(A) to 5'-AMP.. Ubiquitous transcription factor required for a diverse set of processes. It is a component of the CCR4 complex involved in the control of gene expression. The sequence is that of Probable CCR4-associated factor 1 homolog 10 (CAF1-10) from Arabidopsis thaliana (Mouse-ear cress).